The sequence spans 527 residues: Laccase-5 (527 aa).

An N-terminal signal peptide occupies residues 1-23 (MGKFHSFVNVVALSLSLSGRVFG). Residues 25–150 (IGPVTDLTIS…DGLRGPLVVY (126 aa)) form the Plastocyanin-like 1 domain. 2 N-linked (GlcNAc...) asparagine glycosylation sites follow: Asn74 and Asn77. Positions 87, 89, 132, and 134 each coordinate Cu cation. 2 disulfide bridges follow: Cys108/Cys516 and Cys140/Cys230. N-linked (GlcNAc...) asparagine glycans are attached at residues Asn156, Asn209, Asn233, Asn242, Asn276, Asn317, Asn358, Asn366, Asn393, and Asn402. A Plastocyanin-like 2 domain is found at 162-306 (VDDDTTVITL…GGVNSAILRY (145 aa)). The 126-residue stretch at 373 to 498 (TVPVLLQILS…AGFAIVFAED (126 aa)) folds into the Plastocyanin-like 3 domain. 7 residues coordinate Cu cation: His425, His428, His430, His480, Cys481, His482, and His486.

It belongs to the multicopper oxidase family. It depends on Cu cation as a cofactor.

It localises to the secreted. It carries out the reaction 4 hydroquinone + O2 = 4 benzosemiquinone + 2 H2O. In terms of biological role, lignin degradation and detoxification of lignin-derived products. The chain is Laccase-5 (LCC5) from Trametes versicolor (White-rot fungus).